The chain runs to 64 residues: Hypoxia-inducible lipid droplet-associated protein (64 aa).

A required for targeting to lipid droplets region spans residues 1–37 (MKFMLNLYVLGIMLTLLSIFVRVMESLGGLLESPLPG). The chain crosses the membrane as a helical span at residues 7 to 24 (LYVLGIMLTLLSIFVRVM). The span at 42–51 (TRGQLANTQP) shows a compositional bias: polar residues. The segment at 42-64 (TRGQLANTQPPKGLPDHPSRGVQ) is disordered. Basic and acidic residues predominate over residues 55–64 (LPDHPSRGVQ).

It is found in the lipid droplet. The protein resides in the secreted. Its subcellular location is the membrane. In terms of biological role, increases intracellular lipid accumulation. Stimulates expression of cytokines including IL6, MIF and VEGFA. Enhances cell growth and proliferation. The polypeptide is Hypoxia-inducible lipid droplet-associated protein (Hilpda) (Mus musculus (Mouse)).